We begin with the raw amino-acid sequence, 391 residues long: 8-amino-7-oxononanoate synthase (391 aa).

Arginine 19 contributes to the substrate binding site. Position 106 to 107 (106 to 107 (GY)) interacts with pyridoxal 5'-phosphate. Residue histidine 131 coordinates substrate. Positions 178, 206, and 234 each coordinate pyridoxal 5'-phosphate. Position 237 is an N6-(pyridoxal phosphate)lysine (lysine 237). Threonine 353 contributes to the substrate binding site.

The protein belongs to the class-II pyridoxal-phosphate-dependent aminotransferase family. BioF subfamily. In terms of assembly, homodimer. Requires pyridoxal 5'-phosphate as cofactor.

It carries out the reaction 6-carboxyhexanoyl-[ACP] + L-alanine + H(+) = (8S)-8-amino-7-oxononanoate + holo-[ACP] + CO2. It functions in the pathway cofactor biosynthesis; biotin biosynthesis. Functionally, catalyzes the decarboxylative condensation of pimeloyl-[acyl-carrier protein] and L-alanine to produce 8-amino-7-oxononanoate (AON), [acyl-carrier protein], and carbon dioxide. The sequence is that of 8-amino-7-oxononanoate synthase from Pelobacter propionicus (strain DSM 2379 / NBRC 103807 / OttBd1).